A 277-amino-acid polypeptide reads, in one-letter code: Ubiquinone biosynthesis protein COQ4, mitochondrial (277 aa).

A mitochondrion-targeting transit peptide spans 1–14 (MLTKRALRTTDPYR). Residues histidine 157, aspartate 158, histidine 161, and glutamate 173 each coordinate Zn(2+).

It belongs to the COQ4 family. Component of a multi-subunit COQ enzyme complex, composed of at least COQ3, COQ4, COQ5, COQ6, COQ7 and COQ9. Zn(2+) serves as cofactor.

Its subcellular location is the mitochondrion inner membrane. The catalysed reaction is a 4-hydroxy-3-methoxy-5-(all-trans-polyprenyl)benzoate + H(+) = a 2-methoxy-6-(all-trans-polyprenyl)phenol + CO2. It functions in the pathway cofactor biosynthesis; ubiquinone biosynthesis. Lyase that catalyzes the C1-decarboxylation of 4-hydroxy-3-methoxy-5-(all-trans-polyprenyl)benzoic acid into 2-methoxy-6-(all-trans-polyprenyl)phenol during ubiquinone biosynthesis. The polypeptide is Ubiquinone biosynthesis protein COQ4, mitochondrial (Ajellomyces capsulatus (strain G186AR / H82 / ATCC MYA-2454 / RMSCC 2432) (Darling's disease fungus)).